The sequence spans 364 residues: Mitogen-activated protein kinase 11 (364 aa).

The Protein kinase domain occupies 24–308; that stretch reads LQGLRPVGSG…AAEALAHAYF (285 aa). ATP-binding positions include 30-38 and Lys53; that span reads VGSGAYGSV. Glu71 provides a ligand contact to nilotinib. Catalysis depends on Asp168, which acts as the Proton acceptor. The residue at position 180 (Thr180) is a Phosphothreonine; by MAP2K3, MAP2K4 and MAP2K6. The TXY signature appears at 180 to 182; sequence TGY. Phosphotyrosine; by MAP2K3, MAP2K4 and MAP2K6 is present on Tyr182. Residues 312–331 are disordered; it reads HDPDDEPEAEPYDESVEAKE. A compositionally biased stretch (acidic residues) spans 314 to 326; sequence PDDEPEAEPYDES. Tyr323 is subject to Phosphotyrosine; by ZAP70.

This sequence belongs to the protein kinase superfamily. CMGC Ser/Thr protein kinase family. MAP kinase subfamily. As to quaternary structure, interacts with HDAC3 and DUSP16. Mg(2+) serves as cofactor. In terms of processing, dually phosphorylated on Thr-180 and Tyr-182 by MAP2K3/MKK3, MAP2K4/MKK4 and MAP2K6/MKK6, which activates the enzyme.

It is found in the cytoplasm. It localises to the nucleus. It carries out the reaction L-seryl-[protein] + ATP = O-phospho-L-seryl-[protein] + ADP + H(+). It catalyses the reaction L-threonyl-[protein] + ATP = O-phospho-L-threonyl-[protein] + ADP + H(+). With respect to regulation, activated by phosphorylation on threonine and tyrosine by MAP2K3/MKK3, MAP2K4/MKK4 and MAP2K6/MKK6. MAP2K3/MKK3 and MAP2K6/MKK6 are both essential for the activation of MAPK11 induced by environmental stress. HDAC3 interacts directly and selectively with MAPK11 to repress ATF2 transcriptional activity, and regulate TNF gene expression in LPS-stimulated cells. Inhibited by SB203580 and pyridinyl-imidazole related compounds. In terms of biological role, serine/threonine kinase which acts as an essential component of the MAP kinase signal transduction pathway. MAPK11 is one of the four p38 MAPKs which play an important role in the cascades of cellular responses evoked by extracellular stimuli such as pro-inflammatory cytokines or physical stress leading to direct activation of transcription factors. Accordingly, p38 MAPKs phosphorylate a broad range of proteins and it has been estimated that they may have approximately 200 to 300 substrates each. MAPK11 functions are mostly redundant with those of MAPK14. Some of the targets are downstream kinases which are activated through phosphorylation and further phosphorylate additional targets. RPS6KA5/MSK1 and RPS6KA4/MSK2 can directly phosphorylate and activate transcription factors such as CREB1, ATF1, the NF-kappa-B isoform RELA/NFKB3, STAT1 and STAT3, but can also phosphorylate histone H3 and the nucleosomal protein HMGN1. RPS6KA5/MSK1 and RPS6KA4/MSK2 play important roles in the rapid induction of immediate-early genes in response to stress or mitogenic stimuli, either by inducing chromatin remodeling or by recruiting the transcription machinery. On the other hand, two other kinase targets, MAPKAPK2/MK2 and MAPKAPK3/MK3, participate in the control of gene expression mostly at the post-transcriptional level, by phosphorylating ZFP36 (tristetraprolin) and ELAVL1, and by regulating EEF2K, which is important for the elongation of mRNA during translation. MKNK1/MNK1 and MKNK2/MNK2, two other kinases activated by p38 MAPKs, regulate protein synthesis by phosphorylating the initiation factor EIF4E2. In the cytoplasm, the p38 MAPK pathway is an important regulator of protein turnover. For example, CFLAR is an inhibitor of TNF-induced apoptosis whose proteasome-mediated degradation is regulated by p38 MAPK phosphorylation. Ectodomain shedding of transmembrane proteins is regulated by p38 MAPKs as well. In response to inflammatory stimuli, p38 MAPKs phosphorylate the membrane-associated metalloprotease ADAM17. Such phosphorylation is required for ADAM17-mediated ectodomain shedding of TGF-alpha family ligands, which results in the activation of EGFR signaling and cell proliferation. Additional examples of p38 MAPK substrates are the FGFR1. FGFR1 can be translocated from the extracellular space into the cytosol and nucleus of target cells, and regulates processes such as rRNA synthesis and cell growth. FGFR1 translocation requires p38 MAPK activation. In the nucleus, many transcription factors are phosphorylated and activated by p38 MAPKs in response to different stimuli. Classical examples include ATF1, ATF2, ATF6, ELK1, PTPRH, DDIT3, TP53/p53 and MEF2C and MEF2A. The p38 MAPKs are emerging as important modulators of gene expression by regulating chromatin modifiers and remodelers. The promoters of several genes involved in the inflammatory response, such as IL6, IL8 and IL12B, display a p38 MAPK-dependent enrichment of histone H3 phosphorylation on 'Ser-10' (H3S10ph) in LPS-stimulated myeloid cells. This phosphorylation enhances the accessibility of the cryptic NF-kappa-B-binding sites marking promoters for increased NF-kappa-B recruitment. Phosphorylates methyltransferase DOT1L on 'Ser-834', 'Thr-900', 'Ser-902', 'Thr-984', 'Ser-1001', 'Ser-1009' and 'Ser-1104'. The protein is Mitogen-activated protein kinase 11 (Mapk11) of Mus musculus (Mouse).